The following is a 162-amino-acid chain: Fibroblast growth factor 22 (162 aa).

The N-terminal stretch at Met1 to Gly22 is a signal peptide.

It belongs to the heparin-binding growth factors family. In terms of assembly, interacts with FGFR1 and FGFR2. Interacts with FGFBP1. In terms of tissue distribution, preferentially expressed in skin; low expression in brain. Expressed in the inner root sheath of the hair follicle.

It is found in the secreted. Its function is as follows. Plays a role in the fasting response, glucose homeostasis, lipolysis and lipogenesis. Can stimulate cell proliferation (in vitro). May be involved in hair development. This chain is Fibroblast growth factor 22 (Fgf22), found in Mus musculus (Mouse).